The primary structure comprises 227 residues: Apoptosis regulator OPG045 (227 aa).

The protein belongs to the orthopoxvirus OPG045 family. As to quaternary structure, homodimer. Interacts with host pro-apoptotic protein BCL2L11 (via BH3 domain). Interacts with host NLRP1. Interacts with host BAK.

The protein resides in the host mitochondrion outer membrane. Its subcellular location is the host cytoplasm. Plays a role in evading host innate immune response by inhibiting host inflammasome activation. Interacts with and inhibits NLR-mediated interleukin-1 beta/IL1B production in infected cells. At the host mitochondria outer membrane, interacts with the BH3 domain of host BAK and prevents BAK from binding active BAX. In turn, host apoptosis is inhibited. This Oryctolagus cuniculus (Rabbit) protein is Apoptosis regulator OPG045 (OPG045).